A 150-amino-acid polypeptide reads, in one-letter code: Large ribosomal subunit protein bL9 (150 aa).

It belongs to the bacterial ribosomal protein bL9 family.

In terms of biological role, binds to the 23S rRNA. This chain is Large ribosomal subunit protein bL9, found in Burkholderia mallei (strain NCTC 10247).